We begin with the raw amino-acid sequence, 227 residues long: UPF0758 protein PG_0894 (227 aa).

The 124-residue stretch at 104–227 (SITDSRMAYR…YFSFADEGLL (124 aa)) folds into the MPN domain. Residues histidine 175, histidine 177, and aspartate 188 each coordinate Zn(2+). The short motif at 175–188 (HNHPSGTVRPSEQD) is the JAMM motif element.

It belongs to the UPF0758 family.

The protein is UPF0758 protein PG_0894 of Porphyromonas gingivalis (strain ATCC BAA-308 / W83).